Consider the following 429-residue polypeptide: Trehalose-phosphate phosphatase (429 aa).

Asp181 serves as the catalytic Nucleophile. The Mg(2+) site is built by Asp181, Asp183, and Asp368. Residue 181–183 (DFD) participates in substrate binding.

It belongs to the trehalose phosphatase family. Mg(2+) serves as cofactor.

The enzyme catalyses alpha,alpha-trehalose 6-phosphate + H2O = alpha,alpha-trehalose + phosphate. It participates in glycan biosynthesis; trehalose biosynthesis. In terms of biological role, removes the phosphate from trehalose 6-phosphate to produce free trehalose. This chain is Trehalose-phosphate phosphatase (otsB), found in Mycobacterium leprae (strain TN).